We begin with the raw amino-acid sequence, 589 residues long: Putative ABC transporter ATP-binding protein MG015 (589 aa).

Helical transmembrane passes span 9–29 (LLYV…NPIL), 66–86 (LTIV…FNVA), 161–181 (LIFL…ATLI), 251–271 (IFLF…SISI), 280–300 (IPSF…IASL), and 303–323 (ITLA…GVVS). Residues 9 to 319 (LLYVFLCIVL…IFTLWNLVQL (311 aa)) enclose the ABC transmembrane type-1 domain. The ABC transporter domain occupies 352–586 (IRFENVAFGY…NGFYARLKQS (235 aa)). Residue 385 to 392 (GPTGAGKS) participates in ATP binding.

Belongs to the ABC transporter superfamily.

Its subcellular location is the cell membrane. The polypeptide is Putative ABC transporter ATP-binding protein MG015 (Mycoplasma genitalium (strain ATCC 33530 / DSM 19775 / NCTC 10195 / G37) (Mycoplasmoides genitalium)).